A 335-amino-acid polypeptide reads, in one-letter code: Mevalonate kinase (335 aa).

Position 111-121 (111-121) interacts with ATP; it reads PVGAGLGSSAA. The Proton acceptor role is filled by Asp-162.

Belongs to the GHMP kinase family. Mevalonate kinase subfamily. Homodimer. Mg(2+) serves as cofactor.

It localises to the cytoplasm. The catalysed reaction is (R)-mevalonate + ATP = (R)-5-phosphomevalonate + ADP + H(+). It participates in isoprenoid biosynthesis; isopentenyl diphosphate biosynthesis via mevalonate pathway; isopentenyl diphosphate from (R)-mevalonate: step 1/3. Its function is as follows. Catalyzes the phosphorylation of (R)-mevalonate (MVA) to (R)-mevalonate 5-phosphate (MVAP). Functions in the mevalonate (MVA) pathway leading to isopentenyl diphosphate (IPP), a key precursor for the biosynthesis of isoprenoid compounds such as archaeal membrane lipids. The chain is Mevalonate kinase from Pyrococcus horikoshii (strain ATCC 700860 / DSM 12428 / JCM 9974 / NBRC 100139 / OT-3).